We begin with the raw amino-acid sequence, 3477 residues long: Abnormal spindle-like microcephaly-associated protein (3477 aa).

The disordered stretch occupies residues 1–30; it reads MANRRVGRGCWEVSPTERRPPAGLRGPAAE. Residues Ser-280, Ser-283, Ser-367, and Ser-392 each carry the phosphoserine modification. The segment at 308–409 is sufficient for interaction with KATNA1:KATNB1; sequence ITQSQIHFLS…NMAYMCTSQQ (102 aa). Residues 415-424 are compositionally biased toward polar residues; sequence LSNENSQVPQ. Disordered regions lie at residues 415–443 and 559–581; these read LSNENSQVPQSPEDWRKSEVSPRIPECQG and KNEVTPSSTTASVARKRKSDGSM. A Phosphoserine modification is found at Ser-425. The segment covering 560 to 570 has biased composition (polar residues); the sequence is NEVTPSSTTAS. Residue Ser-605 is modified to Phosphoserine. The Calponin-homology (CH) 1 domain maps to 920–1056; that stretch reads KASKEILLAF…LLWKIAFAFQ (137 aa). A coiled-coil region spans residues 1057 to 1078; that stretch reads VDISLNLDQLKEEIAFLKHTKS. Ser-1103 carries the post-translational modification Phosphoserine. A Calponin-homology (CH) 2 domain is found at 1110 to 1261; it reads SENIKLLMDW…YLSFLCARLL (152 aa). IQ domains lie at 1347–1378, 1393–1422, 1582–1613, 1632–1661, 1655–1684, 1728–1757, 1751–1782, 1801–1830, 1824–1853, 1874–1903, 1897–1928, 1947–1978, 1970–2001, 2020–2049, 2043–2074, 2093–2124, 2116–2147, 2166–2197, 2189–2218, 2239–2270, 2262–2293, 2311–2342, 2334–2365, 2384–2415, 2407–2438, 2457–2488, 2530–2561, 2624–2653, 2665–2696, 2688–2719, 2738–2767, 2859–2890, 2909–2938, 2932–2963, 2954–2985, 3029–3060, 3079–3110, 3181–3210, and 3204–3235; these read QNKAASLIQGYWRRYSTRQRFLKLKYYSIILQ, YLWATVTIQRHWRAYLRRKQDQQRYEMLKS, LKKTIIKFQAHVRKHQQRQKYKKMKKAAVIIQ, TRSAVIVLQSAYRGMQARKMYIHILTSVIK, ILTSVIKIQSYYRAYVSKKEFLSLKNATIK, MRESCIKLQAFVRGYLVRKQMRLQRKAVIS, QRKAVISLQSYFRMRKARQYYLKMYKAIIVIQ, VKKAATCLQAAYRGYKVRQLIKQQSIAALK, QSIAALKIQSAFRGYNKRVKYQSVLQSIIK, TKAAVISLQSAYRGWKVRKQIRREHQAALK, EHQAALKIQSAFRMAKAQKQFRLFKTAALVIQ, LRHAVLVLQSMWKGKTLRRQLQRQHKCAIIIQ, QHKCAIIIQSYYRMHVQQKKWKIMKKAALLIQ, TKAAVVTLQSAYRGMKVRKRIKDCNKAAVT, CNKAAVTIQSKYRAYKTKKKYATYRASAIIIQ, LKKTAIKIQSVYRGIRVRRHIQHMHRAATFIK, MHRAATFIKAMFKMHQSRISYHTMRKAAIVIQ, ILKAVKVLQASFRGVRVRRTLRKMQTAATLIQ, MQTAATLIQSNYRRYRQQTYFNKLKKITKT, LRHSVIYIQAIFRGKKARRHLKMMHIAATLIQ, MHIAATLIQRRFRTLMMRRRFLSLKKTAILIQ, VQNAVIKIQSSYRRWMIRKRMREMHRAATFIQ, MHRAATFIQSTFRMHRLHMRYQALKQASVVIQ, QRHSAVILQAAFRGMKTRRHLKSMHSSATLIQ, MHSSATLIQSRFRSLLVRRRFISLKKATIFVQ, LRKAAITIQSSYRRLMVKKKLQEMQRAAVLIQ, QWHSAVVIQAAYKGMKARQLLREKHKASIVIQ, QHQAAIIIQKHCKAFKIRKHYLHLRATVVS, RTQAVICIQSYYRGFKVRKDIQNMHRAATLIQ, MHRAATLIQSFYRMHRAKVDYETKKTAIVVIQ, VQKSVRTIQAAFRGMKVRQKLKNVSEEKMA, QKRAAITLQHYFRTWQTRKQFLLYRKAAVVLQ, IRSSVIIIQARSKGFIQKRKFQEIKNSTIK, IKNSTIKIQAMWRRYRAKKYLCKVKAACKIQA, KVKAACKIQAWYRCWRAHKEYLAILKAVKIIQ, RHRAACLIQAHYRGYKGRQVFLRQKSAALIIQ, FKKSTVILQALVRGWLVRKRFLEQRAKIRLLH, RNRAASVIQKAVRHFLLRKKQEKFTSGIIK, and FTSGIIKIQALWRGYSWRKKNDCTKIKAIRLS.

Interacts with KATNA1 and KATNB1; katanin complex formation KATNA1:KATNB1 is required for the association.

Its subcellular location is the cytoplasm. The protein localises to the cytoskeleton. It localises to the spindle. The protein resides in the nucleus. In terms of biological role, involved in mitotic spindle regulation and coordination of mitotic processes. The function in regulating microtubule dynamics at spindle poles including spindle orientation, astral microtubule density and poleward microtubule flux seems to depend on the association with the katanin complex formed by KATNA1 and KATNB1. Enhances the microtubule lattice severing activity of KATNA1 by recruiting the katanin complex to microtubules. Can block microtubule minus-end growth and reversely this function can be enhanced by the katanin complex. May have a preferential role in regulating neurogenesis. This is Abnormal spindle-like microcephaly-associated protein (ASPM) from Homo sapiens (Human).